The sequence spans 430 residues: ATP-dependent RNA helicase RhlB (430 aa).

A Q motif motif is present at residues 9-37 (QKFSDFALHPQVIEALESKGFHYCTPIQA). The Helicase ATP-binding domain occupies 40–219 (LPLTLSGRDV…FEQMNNAEYV (180 aa)). 53–60 (AQTGTGKT) is an ATP binding site. The DEAD box signature appears at 165–168 (DEAD). The 146-residue stretch at 245 to 390 (RLLQTLLEEE…LSKYNSDALM (146 aa)) folds into the Helicase C-terminal domain. The segment at 392-430 (DLPAPKRLTRPPRSNNGPRRHNSAPRRSGAPRNNRKRAD) is disordered.

This sequence belongs to the DEAD box helicase family. RhlB subfamily. Component of the RNA degradosome, which is a multiprotein complex involved in RNA processing and mRNA degradation.

Its subcellular location is the cytoplasm. It catalyses the reaction ATP + H2O = ADP + phosphate + H(+). Its function is as follows. DEAD-box RNA helicase involved in RNA degradation. Has RNA-dependent ATPase activity and unwinds double-stranded RNA. The protein is ATP-dependent RNA helicase RhlB of Pectobacterium atrosepticum (strain SCRI 1043 / ATCC BAA-672) (Erwinia carotovora subsp. atroseptica).